The following is a 431-amino-acid chain: Glucose-1-phosphate adenylyltransferase (431 aa).

Beta-D-fructose 1,6-bisphosphate is bound at residue Lys-39. The AMP site is built by Arg-40, His-46, and Arg-52. Tyr-114 provides a ligand contact to alpha-D-glucose 1-phosphate. AMP is bound at residue Arg-130. Residues Gly-179, 194–195 (EK), and Ser-212 each bind alpha-D-glucose 1-phosphate. Position 386 (Arg-386) interacts with AMP. Residues 419–423 (REMLR) and 429–431 (QER) contribute to the beta-D-fructose 1,6-bisphosphate site.

It belongs to the bacterial/plant glucose-1-phosphate adenylyltransferase family. In terms of assembly, homotetramer.

It catalyses the reaction alpha-D-glucose 1-phosphate + ATP + H(+) = ADP-alpha-D-glucose + diphosphate. The protein operates within glycan biosynthesis; glycogen biosynthesis. Its activity is regulated as follows. Allosterically activated by fructose-1,6-bisphosphate (F16BP) and inhibited by AMP. Its function is as follows. Involved in the biosynthesis of ADP-glucose, a building block required for the elongation reactions to produce glycogen. Catalyzes the reaction between ATP and alpha-D-glucose 1-phosphate (G1P) to produce pyrophosphate and ADP-Glc. This Enterobacter sp. (strain 638) protein is Glucose-1-phosphate adenylyltransferase.